Consider the following 65-residue polypeptide: Large ribosomal subunit protein bL33c (65 aa).

This sequence belongs to the bacterial ribosomal protein bL33 family.

Its subcellular location is the plastid. It localises to the chloroplast. This is Large ribosomal subunit protein bL33c from Chara vulgaris (Common stonewort).